A 422-amino-acid polypeptide reads, in one-letter code: Phospho-N-acetylmuramoyl-pentapeptide-transferase (422 aa).

Helical transmembrane passes span 28-48, 71-91, 95-115, 136-156, 208-228, 239-259, 279-299, 313-333, and 399-419; these read LMAI…FINL, VGVP…PCLL, LHNI…TLGF, IIGQ…SPSV, AQAV…TAVS, GMAA…AYVS, LVIF…YNAF, IGGI…IPIL, and KITV…IITL.

It belongs to the glycosyltransferase 4 family. MraY subfamily. It depends on Mg(2+) as a cofactor.

Its subcellular location is the cell inner membrane. The enzyme catalyses UDP-N-acetyl-alpha-D-muramoyl-L-alanyl-gamma-D-glutamyl-meso-2,6-diaminopimeloyl-D-alanyl-D-alanine + di-trans,octa-cis-undecaprenyl phosphate = di-trans,octa-cis-undecaprenyl diphospho-N-acetyl-alpha-D-muramoyl-L-alanyl-D-glutamyl-meso-2,6-diaminopimeloyl-D-alanyl-D-alanine + UMP. The protein operates within cell wall biogenesis; peptidoglycan biosynthesis. In terms of biological role, catalyzes the initial step of the lipid cycle reactions in the biosynthesis of the cell wall peptidoglycan: transfers peptidoglycan precursor phospho-MurNAc-pentapeptide from UDP-MurNAc-pentapeptide onto the lipid carrier undecaprenyl phosphate, yielding undecaprenyl-pyrophosphoryl-MurNAc-pentapeptide, known as lipid I. The chain is Phospho-N-acetylmuramoyl-pentapeptide-transferase from Phocaeicola vulgatus (strain ATCC 8482 / DSM 1447 / JCM 5826 / CCUG 4940 / NBRC 14291 / NCTC 11154) (Bacteroides vulgatus).